Here is a 67-residue protein sequence, read N- to C-terminus: Conotoxin TsMMSK-B022 (67 aa).

The first 22 residues, 1–22 (MMSKLGVLLTICLLLFPLTAVS), serve as a signal peptide directing secretion. A propeptide spanning residues 23–50 (LDGDQPADLPELRAQDFAPERSPWFDPV) is cleaved from the precursor. Cystine bridges form between C53–C65, C54–C61, and C58–C64. Position 63 is a 4-hydroxyproline (P63).

It belongs to the conotoxin M superfamily. Expressed by the venom duct.

The protein resides in the secreted. This Conus tessulatus (Tessellate cone) protein is Conotoxin TsMMSK-B022.